Here is a 101-residue protein sequence, read N- to C-terminus: DET1- and DDB1-associated protein 1 (101 aa).

Positions 67 to 101 (NAAKKRDQDQLEIGETSAPPRKIARTDSQEMNEDT) are disordered.

It belongs to the DDA1 family. As to quaternary structure, component of numerous DCX (DDB1-CUL4-X-box) E3 ubiquitin-protein ligase complexes which consist of a core of DDB1, cullin-4 (CUL4A or CUL4B), DDA1 and RBX1.

The protein operates within protein modification; protein ubiquitination. Functions as a component of numerous distinct DCX (DDB1-CUL4-X-box) E3 ubiquitin-protein ligase complexes which mediate the ubiquitination and subsequent proteasomal degradation of target proteins. In the DCX complexes, acts as a scaffolding subunit required to stabilize the complex. The protein is DET1- and DDB1-associated protein 1 of Xenopus laevis (African clawed frog).